Here is a 445-residue protein sequence, read N- to C-terminus: CBL-interacting protein kinase 3 (445 aa).

One can recognise a Protein kinase domain in the interval 19–274; that stretch reads YELGRAIGQG…TSQVLQDQWF (256 aa). Residues 25 to 33 and Lys48 contribute to the ATP site; that span reads IGQGTFAKV. The Proton acceptor role is filled by Asp142. Residues 160–189 are activation loop; the sequence is DFGLSAISEQVKADGLLHTTCGTPNYVAPE. In terms of domain architecture, NAF spans 309 to 336; the sequence is AMEEQPTLMNAFELISLNKGLNLDNFFE. Residues 342–371 are PPI; sequence KRETRFTSQCPPKEIINRIEEAANLLGFNI.

This sequence belongs to the protein kinase superfamily. CAMK Ser/Thr protein kinase family. SNF1 subfamily. Mn(2+) is required as a cofactor.

The catalysed reaction is L-seryl-[protein] + ATP = O-phospho-L-seryl-[protein] + ADP + H(+). It catalyses the reaction L-threonyl-[protein] + ATP = O-phospho-L-threonyl-[protein] + ADP + H(+). Its function is as follows. CIPK serine-threonine protein kinases interact with CBL proteins. Binding of a CBL protein to the regulatory NAF domain of CIPK protein lead to the activation of the kinase in a calcium-dependent manner. The sequence is that of CBL-interacting protein kinase 3 (CIPK3) from Oryza sativa subsp. japonica (Rice).